Reading from the N-terminus, the 935-residue chain is MHDIDVAIQINMLFLPPTNELIRVDSNSKQLNQPQQQQQQQQQQINNENENSINNQENKENNNKDNNNNNNKEIKQSSEWGSKFSSLFSNMTKKKKSNFDLEMDAIKDAFLLNKPINNEEGLLIYSLDKSKKYIHSLSELDIGYVYLTEKETPIIRQNEDEVILANKVIIQANTMKRFSIKGILQSDVTTNALEIFTKRKMSQGVLFLEEDGSLCRIFYKIQDLITDTIYCNQDDTVMLQKLPNNEGIRFRFRGSFNREQVQQAMLAFSQPSDPQTWKRTIILREQQHHSSQSFTGDSVASRFLNKLSSKTKEDEESNDLKTKRENTVLKLKNRMKIDWDWKYTSTSVPIDQEPPTFIDNMVNRVREKISGSNNKLSDLLSSAKKQPQQQPQKDVTSSSSSSSNSSSPYLDSVDKLVITTNDSSSSNPLPDFDKLSLSSDDKVNNNNVQIENTTPSVPPPPPVGAPPPPPPPPPPPPPPPPSTLKLNRNRISTPKKPNNSGGGGGGGQLTPLQKKMRQLHWNAIPREKLKETFWDNLSPVKGNDNDQTLVESWFSLSPMAKEKMSKENLNNSNNNNNNNSNNNGEEQSLSDSGNTIVISKIIILDLRRSNNICILLSQFKLSYGAIKEAILCFEDGKLSVEQLIALDAMLPISEEEYQSLSSANYQSIEQLGNAERFLIEMMSIQHLQQRVQTYLFKLEVCSLLDSIEINNNQLSKAIEQLRNSRKFIKVLKVIFHIGSILNRGTYLNSTKGFKLDSLSKLSETKSKDQKHTVVDFIEIYIRENQPELLNFYSELDLLDKIPQSSLENILEESNEIENKFKQVDQEIQYHQQLLTNDNNNTLSSSSSSSYDQSKDTYLKVMSPFYDTFNTRFITIKQSTQQTLKQFQECCIYFGEDPQNITSKDFFSNIVKFSIAFKSSSNNAKKSLNLSTLNSK.

Residues 35–76 (QQQQQQQQQQINNENENSINNQENKENNNKDNNNNNNKEIKQ) are a coiled coil. 3 disordered regions span residues 52–78 (SINN…KQSS), 380–511 (LSSA…QLTP), and 561–590 (KEKM…QSLS). Residues 384–407 (KKQPQQQPQKDVTSSSSSSSNSSS) are compositionally biased toward low complexity. Over residues 418–428 (ITTNDSSSSNP) the composition is skewed to polar residues. The span at 431–443 (DFDKLSLSSDDKV) shows a compositional bias: basic and acidic residues. Residues 444-454 (NNNNVQIENTT) show a composition bias toward polar residues. Positions 444–505 (NNNNVQIENT…KPNNSGGGGG (62 aa)) constitute an FH1 domain. The span at 456–482 (SVPPPPPVGAPPPPPPPPPPPPPPPPS) shows a compositional bias: pro residues. The segment covering 484-499 (LKLNRNRISTPKKPNN) has biased composition (polar residues). In terms of domain architecture, FH2 spans 506 to 935 (GGQLTPLQKK…SLNLSTLNSK (430 aa)). A compositionally biased stretch (low complexity) spans 568–583 (NLNNSNNNNNNNSNNN). Coiled-coil stretches lie at residues 702–730 (SLLD…FIKV) and 803–834 (QSSL…QQLL).

Belongs to the formin homology family. Diaphanous subfamily.

Formins play an important role in the nucleation of actin and the formation of linear actin filaments. This chain is Formin-I (forI), found in Dictyostelium discoideum (Social amoeba).